The following is a 317-amino-acid chain: MRFVGNRVVLIGAGDVGVAYAYALVNQGIADELCIIDIDEKKLEGNVMDLSHGVVWAGKRTKVRKGTYSDCEDAAMVVICAGAAQKPGETRLQLVDKNVNIMHTIVDEVMANGFDGLFLVATNPVDILTYAVWKFSGLDHSRVIGSGTVLDTARFRYMLGELYDVSPKSIHAYIIGEHGDTELPVLSSATIAGVSMRKMLEKDPELEPRLEKIFEDTRDAAYRIIDAKGSTSYGIGMGLARITRAILNNQDVALPVSAYLEGQYGEEDIYIGTPAIIDRSGIHRVVELEISDREMSRFKHSAQTLRAIKDEIFPVGE.

Residues Val-16, Asp-37, Lys-42, Tyr-68, and 82–83 each bind NAD(+); that span reads GA. Residues Gln-85 and Arg-91 each contribute to the substrate site. NAD(+)-binding positions include Thr-104, 121-123, and Ser-146; that span reads ATN. 123–126 is a binding site for substrate; that stretch reads NPVD. 151–154 contacts substrate; it reads DTAR. Positions 156 and 171 each coordinate beta-D-fructose 1,6-bisphosphate. The active-site Proton acceptor is His-178. Tyr-222 carries the post-translational modification Phosphotyrosine. Thr-231 is a binding site for substrate.

It belongs to the LDH/MDH superfamily. LDH family. As to quaternary structure, homotetramer.

It is found in the cytoplasm. It catalyses the reaction (S)-lactate + NAD(+) = pyruvate + NADH + H(+). Its pathway is fermentation; pyruvate fermentation to lactate; (S)-lactate from pyruvate: step 1/1. With respect to regulation, allosterically activated by fructose 1,6-bisphosphate (FBP). Catalyzes the conversion of lactate to pyruvate. The protein is L-lactate dehydrogenase of Corynebacterium efficiens (strain DSM 44549 / YS-314 / AJ 12310 / JCM 11189 / NBRC 100395).